We begin with the raw amino-acid sequence, 265 residues long: 3-methyl-2-oxobutanoate hydroxymethyltransferase (265 aa).

2 residues coordinate Mg(2+): aspartate 44 and aspartate 83. 3-methyl-2-oxobutanoate contacts are provided by residues 44-45 (DS), aspartate 83, and lysine 113. Glutamate 115 provides a ligand contact to Mg(2+). Residue glutamate 182 is the Proton acceptor of the active site.

This sequence belongs to the PanB family. Homodecamer; pentamer of dimers. Mg(2+) serves as cofactor.

The protein localises to the cytoplasm. The enzyme catalyses 3-methyl-2-oxobutanoate + (6R)-5,10-methylene-5,6,7,8-tetrahydrofolate + H2O = 2-dehydropantoate + (6S)-5,6,7,8-tetrahydrofolate. Its pathway is cofactor biosynthesis; (R)-pantothenate biosynthesis; (R)-pantoate from 3-methyl-2-oxobutanoate: step 1/2. Functionally, catalyzes the reversible reaction in which hydroxymethyl group from 5,10-methylenetetrahydrofolate is transferred onto alpha-ketoisovalerate to form ketopantoate. This Aquifex aeolicus (strain VF5) protein is 3-methyl-2-oxobutanoate hydroxymethyltransferase.